The primary structure comprises 291 residues: MSHEKSLQEKKDSSSFKSFHDGASLENDLLQNLQLSSQTVLEIAQKKGRSKCPKCNSSRMFYCYTCFVPVESVPSDDIPVVKLPLKIDIIKHPNETDGKSTAVHAKLLAHEDVTVYTYPCVPQYHDQKHEVVVVFPGPDSVSLSDYLLYLSSSGDLEKNSAYEPSSKRPKFSPENDKNTYEGIDKKKPVNFLKKVIFIDSTWNQTNKMIADERLQGLVHVELMERKTFFWRHQKGTPNTYLSTIEAIYYFMVDYHTKILQKDYKGEYDNLLFFFSFMYRIINDAKKSAGKL.

The disordered stretch occupies residues 158–181 (KNSAYEPSSKRPKFSPENDKNTYE). Positions 171–181 (FSPENDKNTYE) are enriched in basic and acidic residues. The DXTW signature appears at 199-202 (DSTW).

The protein belongs to the TDD superfamily. DTWD1 family.

It localises to the nucleus. The catalysed reaction is a uridine in tRNA + S-adenosyl-L-methionine = a 3-[(3S)-3-amino-3-carboxypropyl]uridine in tRNA + S-methyl-5'-thioadenosine + H(+). In terms of biological role, catalyzes the formation of 3-(3-amino-3-carboxypropyl)uridine (acp3U) at position 20 in the D-loop of several cytoplasmic tRNAs (acp3U(20)). In Xenopus laevis (African clawed frog), this protein is tRNA-uridine aminocarboxypropyltransferase 1.